A 396-amino-acid chain; its full sequence is Argininosuccinate synthase (396 aa).

9–17 (AYSGGLDTS) contacts ATP. Tyr85 contacts L-citrulline. Gly115 is a binding site for ATP. Positions 117, 121, and 122 each coordinate L-aspartate. L-citrulline is bound at residue Asn121. 4 residues coordinate L-citrulline: Arg125, Ser173, Glu258, and Tyr270.

This sequence belongs to the argininosuccinate synthase family. Type 1 subfamily. In terms of assembly, homotetramer.

It is found in the cytoplasm. It catalyses the reaction L-citrulline + L-aspartate + ATP = 2-(N(omega)-L-arginino)succinate + AMP + diphosphate + H(+). It participates in amino-acid biosynthesis; L-arginine biosynthesis; L-arginine from L-ornithine and carbamoyl phosphate: step 2/3. This is Argininosuccinate synthase from Streptococcus agalactiae serotype III (strain NEM316).